Consider the following 391-residue polypeptide: Acridone synthase 2 (391 aa).

The active site involves Cys164.

Belongs to the thiolase-like superfamily. Chalcone/stilbene synthases family. As to quaternary structure, homodimer.

The catalysed reaction is N-methylanthraniloyl-CoA + 3 malonyl-CoA + 3 H(+) = 1,3-dihydroxy-N-methylacridone + 3 CO2 + 4 CoA + H2O. The protein is Acridone synthase 2 (ACS2) of Ruta graveolens (Common rue).